The following is a 509-amino-acid chain: L-arabinose isomerase (509 aa).

Mn(2+) contacts are provided by Glu-313, Glu-340, His-357, and His-456.

It belongs to the arabinose isomerase family. It depends on Mn(2+) as a cofactor.

The catalysed reaction is beta-L-arabinopyranose = L-ribulose. It participates in carbohydrate degradation; L-arabinose degradation via L-ribulose; D-xylulose 5-phosphate from L-arabinose (bacterial route): step 1/3. In terms of biological role, catalyzes the conversion of L-arabinose to L-ribulose. The polypeptide is L-arabinose isomerase (Phocaeicola vulgatus (strain ATCC 8482 / DSM 1447 / JCM 5826 / CCUG 4940 / NBRC 14291 / NCTC 11154) (Bacteroides vulgatus)).